Here is a 306-residue protein sequence, read N- to C-terminus: Curved DNA-binding protein (306 aa).

The 65-residue stretch at 5–69 folds into the J domain; it reads DYYAIMGVKP…QRRAEYDQMW (65 aa).

The protein localises to the cytoplasm. Its subcellular location is the nucleoid. In terms of biological role, DNA-binding protein that preferentially recognizes a curved DNA sequence. It is probably a functional analog of DnaJ; displays overlapping activities with DnaJ, but functions under different conditions, probably acting as a molecular chaperone in an adaptive response to environmental stresses other than heat shock. Lacks autonomous chaperone activity; binds native substrates and targets them for recognition by DnaK. Its activity is inhibited by the binding of CbpM. The polypeptide is Curved DNA-binding protein (Escherichia coli (strain SMS-3-5 / SECEC)).